A 375-amino-acid chain; its full sequence is Succinyl-diaminopimelate desuccinylase (375 aa).

H66 provides a ligand contact to Zn(2+). D68 is a catalytic residue. Residue D99 participates in Zn(2+) binding. E133 serves as the catalytic Proton acceptor. Zn(2+) contacts are provided by E134, E162, and H348.

The protein belongs to the peptidase M20A family. DapE subfamily. As to quaternary structure, homodimer. Requires Zn(2+) as cofactor. Co(2+) is required as a cofactor.

The catalysed reaction is N-succinyl-(2S,6S)-2,6-diaminopimelate + H2O = (2S,6S)-2,6-diaminopimelate + succinate. The protein operates within amino-acid biosynthesis; L-lysine biosynthesis via DAP pathway; LL-2,6-diaminopimelate from (S)-tetrahydrodipicolinate (succinylase route): step 3/3. Its function is as follows. Catalyzes the hydrolysis of N-succinyl-L,L-diaminopimelic acid (SDAP), forming succinate and LL-2,6-diaminopimelate (DAP), an intermediate involved in the bacterial biosynthesis of lysine and meso-diaminopimelic acid, an essential component of bacterial cell walls. The sequence is that of Succinyl-diaminopimelate desuccinylase from Pectobacterium atrosepticum (strain SCRI 1043 / ATCC BAA-672) (Erwinia carotovora subsp. atroseptica).